Consider the following 129-residue polypeptide: Small ribosomal subunit protein uS11 (129 aa).

Belongs to the universal ribosomal protein uS11 family. As to quaternary structure, part of the 30S ribosomal subunit. Interacts with proteins S7 and S18. Binds to IF-3.

Functionally, located on the platform of the 30S subunit, it bridges several disparate RNA helices of the 16S rRNA. Forms part of the Shine-Dalgarno cleft in the 70S ribosome. The chain is Small ribosomal subunit protein uS11 from Bacillus cereus (strain ATCC 14579 / DSM 31 / CCUG 7414 / JCM 2152 / NBRC 15305 / NCIMB 9373 / NCTC 2599 / NRRL B-3711).